Reading from the N-terminus, the 122-residue chain is Large ribosomal subunit protein uL14 (122 aa).

It belongs to the universal ribosomal protein uL14 family. Part of the 50S ribosomal subunit. Forms a cluster with proteins L3 and L19. In the 70S ribosome, L14 and L19 interact and together make contacts with the 16S rRNA in bridges B5 and B8.

Binds to 23S rRNA. Forms part of two intersubunit bridges in the 70S ribosome. The polypeptide is Large ribosomal subunit protein uL14 (Fusobacterium nucleatum subsp. nucleatum (strain ATCC 25586 / DSM 15643 / BCRC 10681 / CIP 101130 / JCM 8532 / KCTC 2640 / LMG 13131 / VPI 4355)).